Here is a 427-residue protein sequence, read N- to C-terminus: D-inositol 3-phosphate glycosyltransferase (427 aa).

Histidine 12 is a 1D-myo-inositol 3-phosphate binding site. UDP-N-acetyl-alpha-D-glucosamine contacts are provided by residues 18 to 19 and glycine 26; that span reads QP. Residues 23–28, lysine 81, tyrosine 113, threonine 137, and arginine 157 contribute to the 1D-myo-inositol 3-phosphate site; that span reads DAGGMN. UDP-N-acetyl-alpha-D-glucosamine-binding residues include arginine 234, lysine 239, and arginine 297. The Mg(2+) site is built by tyrosine 306, glutamine 307, and alanine 309. UDP-N-acetyl-alpha-D-glucosamine contacts are provided by glutamate 319 and glutamate 327. Threonine 333 contributes to the Mg(2+) binding site.

Belongs to the glycosyltransferase group 1 family. MshA subfamily. Homodimer.

It catalyses the reaction 1D-myo-inositol 3-phosphate + UDP-N-acetyl-alpha-D-glucosamine = 1D-myo-inositol 2-acetamido-2-deoxy-alpha-D-glucopyranoside 3-phosphate + UDP + H(+). In terms of biological role, catalyzes the transfer of a N-acetyl-glucosamine moiety to 1D-myo-inositol 3-phosphate to produce 1D-myo-inositol 2-acetamido-2-deoxy-glucopyranoside 3-phosphate in the mycothiol biosynthesis pathway. This chain is D-inositol 3-phosphate glycosyltransferase, found in Corynebacterium diphtheriae (strain ATCC 700971 / NCTC 13129 / Biotype gravis).